A 1296-amino-acid polypeptide reads, in one-letter code: Capping protein, Arp2/3 and myosin-I linker protein 2 (1296 aa).

LRR repeat units follow at residues 63 to 87, 88 to 110, 248 to 271, 273 to 296, 305 to 328, 363 to 386, 395 to 415, 426 to 448, 453 to 477, 480 to 506, 515 to 538, 542 to 565, 570 to 594, 598 to 621, and 836 to 859; these read DCTFSYLEVQAMALQETPPRVTFEL, ESLPELVLEFPCVAALEQLAQHV, ELVLEACGLRGDFVRRLAQALAGH, NSGLRELSLSGNLLDDRGMRALGR, DSTLTHLDLSGNPGALGPSQDSGG, CSSLTHLEASRNIFSRMKSQAAPA, TRMLRHLGLAGCKLPPEALRA, IHDLHLDLSACELRSVGAQVIQD, AGALSSLDLSDNGFGSDMVTLVLAI, SRSLKHVALGRNFNVRCKETLDDVLHR, DCPLQSLSVAESRLKQGASILIRA, NPKLTALDISGNAIGDAGAKMLAK, NTRLRSVIWDRNNTSALGLLDVAQA, NHSLKSMPLPLNDVTQAHRSRPEL, and TMAPAVPPLGGNELSPLETGGLEE. The tropomodulin-like stretch occupies residues 507–601; sequence IAQLMQDDDC…AQALEQNHSL (95 aa). The necessary for localization at the cell membrane stretch occupies residues 975–1002; that stretch reads ATPVPRTLRKKLGTLFAFKKPRSTRGPR. Residues 988–1296 form a disordered region; the sequence is TLFAFKKPRS…TDQRGGGPNP (309 aa). A Phosphoserine modification is found at S1008. 2 stretches are compositionally biased toward basic and acidic residues: residues 1079–1091 and 1118–1134; these read RPDKRRPLERGDT and ESKRKQSKDGEIKKAGS. Residue S1134 is modified to Phosphoserine. T1145 is subject to Phosphothreonine. The span at 1176–1185 shows a compositional bias: polar residues; that stretch reads TWKTLGQQLN. Residue R1191 is modified to Omega-N-methylarginine. Pro residues-rich tracts occupy residues 1199–1209 and 1267–1285; these read PGPPSPCPSPS and PLPPYPTEPSSPERSPPSP. Phosphoserine is present on residues S1203 and S1281.

Belongs to the CARMIL family. As to quaternary structure, forms homodimers. Interacts (via C-terminus) with heterodimeric capping protein (CP); the interaction inhibits CP activity and hence promotes actin polymerization at the barbed end of actin filaments.

It is found in the cytoplasm. Its subcellular location is the cytoskeleton. It localises to the cell membrane. The protein localises to the cell projection. The protein resides in the lamellipodium. It is found in the ruffle. Cell membrane-cytoskeleton-associated protein that plays a role in the regulation of actin polymerization at the barbed end of actin filaments. Prevents F-actin heterodimeric capping protein (CP) activity at the leading edges of migrating cells, and hence generates uncapped barbed ends and enhances actin polymerization. Plays a role in cell protrusion formations; involved in cell polarity, lamellipodial assembly, membrane ruffling and macropinosome formations. Involved as well in cell migration and invadopodia formation during wound healing. Required for CD28-mediated stimulation of NF-kappa-B signaling, involved in naive T cells activation, maturation into T memory cells, and differentiation into T helper cells. Required for CD28-mediated differentiation of T regulatory cells. The sequence is that of Capping protein, Arp2/3 and myosin-I linker protein 2 from Mus musculus (Mouse).